The following is a 397-amino-acid chain: Cercosporin biosynthesis regulatory protein CTB8 (397 aa).

Positions 26-53 (CTHCSSQKIRCTKERPACARCVNKGLLC) form a DNA-binding region, zn(2)-C6 fungal-type. 2 disordered regions span residues 63–90 (TRRH…APDS) and 173–198 (AEAS…ATTH). Over residues 74 to 87 (PETTISNAPTSSVA) the composition is skewed to polar residues. Residues 179-197 (PSSSSSPPSQRSDGGRATT) are compositionally biased toward low complexity.

The protein localises to the nucleus. In terms of biological role, transcription regulator of the gene cluster that mediates the biosynthesis of cercosporin, a light-activated, non-host-selective toxin. The perylenequinone chromophore of cercosporin absorbs light energy to attain an electronically-activated triplet state and produces active oxygen species such as the hydroxyl radical, superoxide, hydrogen peroxide or singlet oxygen upon reaction with oxygen molecules. These reactive oxygen species cause damage to various cellular components including lipids, proteins and nucleic acids. The chain is Cercosporin biosynthesis regulatory protein CTB8 from Cercospora beticola (Sugarbeet leaf spot fungus).